A 1141-amino-acid polypeptide reads, in one-letter code: Membrane-associated protein gex-3 (1141 aa).

This sequence belongs to the HEM-1/HEM-2 family. Interacts with aco-1, gei-13 and gex-2. Interacts with gex-3. In terms of tissue distribution, expressed in neurons.

Its subcellular location is the cytoplasm. Its function is as follows. Rac effector required for tissue morphogenesis, cell migrations and egg laying. May play a role in egg laying and in yolk protein clatherin-mediated endocytosis by oocytes during oogenesis. Plays a role in the formation of gap junctions between EA and EP endodermal precursor cells in embryos. The chain is Membrane-associated protein gex-3 from Caenorhabditis elegans.